Consider the following 115-residue polypeptide: NADH-ubiquinone oxidoreductase chain 3 (115 aa).

3 helical membrane-spanning segments follow: residues 3 to 23 (FALI…ITFW), 55 to 75 (FFLV…LLPL), and 84 to 104 (LPLM…SLAY).

Belongs to the complex I subunit 3 family. Core subunit of respiratory chain NADH dehydrogenase (Complex I) which is composed of 45 different subunits. Interacts with TMEM186. Interacts with TMEM242.

It is found in the mitochondrion inner membrane. The enzyme catalyses a ubiquinone + NADH + 5 H(+)(in) = a ubiquinol + NAD(+) + 4 H(+)(out). In terms of biological role, core subunit of the mitochondrial membrane respiratory chain NADH dehydrogenase (Complex I) which catalyzes electron transfer from NADH through the respiratory chain, using ubiquinone as an electron acceptor. Essential for the catalytic activity of complex I. The sequence is that of NADH-ubiquinone oxidoreductase chain 3 from Gorilla gorilla gorilla (Western lowland gorilla).